We begin with the raw amino-acid sequence, 148 residues long: Large ribosomal subunit protein uL15B (148 aa).

2 stretches are compositionally biased toward basic residues: residues 1–13 (MPTH…KLRG) and 21–31 (RIGKHRKHPGG). The segment at 1 to 38 (MPTHTSKTRKLRGHVSAGHGRIGKHRKHPGGRGKAGGL) is disordered. Tyrosine 108 bears the Phosphotyrosine mark.

The protein belongs to the universal ribosomal protein uL15 family. Component of the large ribosomal subunit (LSU). Mature yeast ribosomes consist of a small (40S) and a large (60S) subunit. The 40S small subunit contains 1 molecule of ribosomal RNA (18S rRNA) and at least 33 different proteins. The large 60S subunit contains 3 rRNA molecules (25S, 5.8S and 5S rRNA) and at least 46 different proteins.

The protein localises to the cytoplasm. Its subcellular location is the nucleus. The protein resides in the nucleolus. In terms of biological role, component of the ribosome, a large ribonucleoprotein complex responsible for the synthesis of proteins in the cell. The small ribosomal subunit (SSU) binds messenger RNAs (mRNAs) and translates the encoded message by selecting cognate aminoacyl-transfer RNA (tRNA) molecules. The large subunit (LSU) contains the ribosomal catalytic site termed the peptidyl transferase center (PTC), which catalyzes the formation of peptide bonds, thereby polymerizing the amino acids delivered by tRNAs into a polypeptide chain. The nascent polypeptides leave the ribosome through a tunnel in the LSU and interact with protein factors that function in enzymatic processing, targeting, and the membrane insertion of nascent chains at the exit of the ribosomal tunnel. The protein is Large ribosomal subunit protein uL15B (rpl2801) of Schizosaccharomyces pombe (strain 972 / ATCC 24843) (Fission yeast).